An 81-amino-acid chain; its full sequence is Penaeidin-3j (81 aa).

Residues Met1–Gly19 form the signal peptide. Gln20 is subject to Pyrrolidone carboxylic acid. Intrachain disulfides connect Cys50–Cys65, Cys54–Cys72, and Cys66–Cys73. A Serine amide modification is found at Ser80.

The protein belongs to the penaeidin family.

The protein localises to the cytoplasmic granule. Antibacterial and antifungal activity. Presents chitin-binding activity. This is Penaeidin-3j from Penaeus vannamei (Whiteleg shrimp).